The sequence spans 252 residues: Imidazole glycerol phosphate synthase subunit HisF (252 aa).

Catalysis depends on residues Asp11 and Asp130.

The protein belongs to the HisA/HisF family. In terms of assembly, heterodimer of HisH and HisF.

It localises to the cytoplasm. The catalysed reaction is 5-[(5-phospho-1-deoxy-D-ribulos-1-ylimino)methylamino]-1-(5-phospho-beta-D-ribosyl)imidazole-4-carboxamide + L-glutamine = D-erythro-1-(imidazol-4-yl)glycerol 3-phosphate + 5-amino-1-(5-phospho-beta-D-ribosyl)imidazole-4-carboxamide + L-glutamate + H(+). Its pathway is amino-acid biosynthesis; L-histidine biosynthesis; L-histidine from 5-phospho-alpha-D-ribose 1-diphosphate: step 5/9. IGPS catalyzes the conversion of PRFAR and glutamine to IGP, AICAR and glutamate. The HisF subunit catalyzes the cyclization activity that produces IGP and AICAR from PRFAR using the ammonia provided by the HisH subunit. The polypeptide is Imidazole glycerol phosphate synthase subunit HisF (Staphylococcus aureus (strain bovine RF122 / ET3-1)).